Here is a 1489-residue protein sequence, read N- to C-terminus: FERM domain-containing protein C (1489 aa).

Composition is skewed to polar residues over residues 59 to 79 (DTES…NFNS) and 103 to 118 (NSPL…STSI). Disordered regions lie at residues 59 to 86 (DTES…HQHL), 103 to 197 (NSPL…PSTL), 252 to 271 (NSVQ…NNNN), and 277 to 312 (EQQQ…TPDS). The segment covering 131 to 153 (SSSSSSSDGDSNSSSDSSDNSSE) has biased composition (low complexity). Positions 163–172 (HLHLHRHHRK) are enriched in basic residues. Residues 181–195 (FESSSESSEQYGSPS) show a composition bias toward low complexity. Residues 202-289 (ALKLEKIMQI…QEKQQQQQQH (88 aa)) are a coiled coil. Residues 277–287 (EQQQEKQQQQQ) show a composition bias toward low complexity. A compositionally biased stretch (polar residues) spans 303–312 (RSVSISTPDS). Residues 356–383 (IKVSKVLEEEMQLQQEFEKQEQLRHSAR) adopt a coiled-coil conformation. Disordered regions lie at residues 396 to 435 (NLQD…ENQN), 459 to 479 (VITP…KILT), and 508 to 569 (EDPL…TTTT). Residues 421–435 (ENVSNDNSSDNENQN) are compositionally biased toward low complexity. Residues 545–555 (TASSSSSPTLQ) show a composition bias toward polar residues. The span at 556–569 (ATKTTTTTTTTTTT) shows a compositional bias: low complexity. An FERM domain is found at 637 to 934 (ILVHISLVDQ…GYKYFIQHDE (298 aa)). 13 LRR repeats span residues 1017–1040 (KVEL…LKDT), 1053–1075 (ENLN…AFEP), 1087–1110 (HLNL…IEKY), 1111–1133 (PNIE…VILR), 1167–1191 (NKTI…IFEG), 1196–1219 (SLSL…KFIK), 1254–1278 (SCHI…VIKG), 1282–1306 (NQTI…LCQS), 1339–1362 (NKTI…AIGT), 1367–1391 (NETL…ILNG), 1395–1418 (NSTI…SLAN), 1428–1450 (VITL…QLST), and 1451–1474 (NIPI…IKNA).

This Dictyostelium discoideum (Social amoeba) protein is FERM domain-containing protein C (frmC).